Here is a 472-residue protein sequence, read N- to C-terminus: ATP synthase subunit beta (472 aa).

155-162 (GGAGVGKT) is a binding site for ATP.

Belongs to the ATPase alpha/beta chains family. In terms of assembly, F-type ATPases have 2 components, CF(1) - the catalytic core - and CF(0) - the membrane proton channel. CF(1) has five subunits: alpha(3), beta(3), gamma(1), delta(1), epsilon(1). CF(0) has three main subunits: a(1), b(2) and c(9-12). The alpha and beta chains form an alternating ring which encloses part of the gamma chain. CF(1) is attached to CF(0) by a central stalk formed by the gamma and epsilon chains, while a peripheral stalk is formed by the delta and b chains.

The protein resides in the cell inner membrane. The catalysed reaction is ATP + H2O + 4 H(+)(in) = ADP + phosphate + 5 H(+)(out). In terms of biological role, produces ATP from ADP in the presence of a proton gradient across the membrane. The catalytic sites are hosted primarily by the beta subunits. The polypeptide is ATP synthase subunit beta (Fervidobacterium nodosum (strain ATCC 35602 / DSM 5306 / Rt17-B1)).